A 343-amino-acid chain; its full sequence is MLNIQNYSASPHPGIVAERPQTPSASEHVETAVVPSTTEHRGTDIISLSQAATKIHQAQQTLQSTPPISEENNDERTLARQQLTSSLNALAKSGVSLSAEQNENLRSAFSAPTSALFSASPMAQPRTTISDAEIWDMVSQNISAIGDSYLGVYENVVAVYTDFYQAFSDILSKMGGWLLPGKDGNTVKLDVTSLKNDLNSLVNKYNQINSNTVLFPAQSGSGVKVATEAEARQWLSELNLPNSCLKSYGSGYVVTVDLTPLQKMVQDIDGLGAPGKDSKLEMDNAKYQAWQSGFKAQEENMKTTLQTLTQKYSNANSLYDNLVKVLSSTISSSLETAKSFLQG.

A disordered region spans residues 1 to 26 (MLNIQNYSASPHPGIVAERPQTPSAS). The stretch at 295 to 322 (KAQEENMKTTLQTLTQKYSNANSLYDNL) forms a coiled coil.

The protein belongs to the invasin protein D family.

Its subcellular location is the secreted. Its function is as follows. Required for translocation of effector proteins via the type III secretion system SPI-1, which is essential for an efficient bacterial internalization. Probably acts by modulating the secretion of SipA, SipB, and SipC. In Salmonella typhimurium (strain LT2 / SGSC1412 / ATCC 700720), this protein is Cell invasion protein SipD (sipD).